A 631-amino-acid chain; its full sequence is RING finger protein 112 (631 aa).

The RING-type zinc finger occupies 57 to 98 (CSICLERLRDPISLDCGHDFCIRCFSTHRLPGCEPPCCPECR). Residues 131 to 631 (PVRAEPLLLV…GDREPLLQEE (501 aa)) form an interaction with ZBTB16 region. The region spanning 166–397 (DTPVCLLAVL…YVSDVLSAAP (232 aa)) is the GB1/RHD3-type G domain. 318–319 (RD) is a binding site for GTP. A run of 2 helical transmembrane segments spans residues 547–567 (LAAV…GVVG) and 580–600 (GMVA…GGGV).

Belongs to the TRAFAC class dynamin-like GTPase superfamily. GB1/RHD3 GTPase family. GB1 subfamily. As to quaternary structure, self-associates. Interacts with SP1 in an oxidative stress-regulated manner. Interacts with SIGMAR1 in an oxidative stress-regulated manner. Interacts with ZBTB16 (via C2H2-type zinc finger domains 1 and 2). Auto-ubiquitinated. Predominantly expressed in brain. Decreased expression in glioma brain tumors as compared to normal brains (at protein level).

Its subcellular location is the membrane. It is found in the cytoplasm. The protein resides in the nucleus. It localises to the nuclear body. The protein localises to the nucleoplasm. Its subcellular location is the endosome. It is found in the cytoplasmic vesicle. The protein resides in the secretory vesicle. It localises to the synaptic vesicle. The protein localises to the postsynaptic density. Its subcellular location is the perikaryon. It is found in the cell projection. The protein resides in the neuron projection. The catalysed reaction is S-ubiquitinyl-[E2 ubiquitin-conjugating enzyme]-L-cysteine + [acceptor protein]-L-lysine = [E2 ubiquitin-conjugating enzyme]-L-cysteine + N(6)-ubiquitinyl-[acceptor protein]-L-lysine.. Its pathway is protein modification; protein ubiquitination. E3 ubiquitin-protein ligase that plays an important role in neuronal differentiation, including neurogenesis and gliogenesis, during brain development. During embryonic development initiates neuronal differentiation by inducing cell cycle arrest at the G0/G1 phase through up-regulation of cell-cycle regulatory proteins. Plays a role not only in the fetal period during the development of the nervous system, but also in the adult brain, where it is involved in the maintenance of neural functions and protection of the nervous tissue cells from oxidative stress-induced damage. Exhibits GTPase and E3 ubiquitin-protein ligase activities. Regulates dendritic spine density and synaptic neurotransmission; its ability to hydrolyze GTP is involved in the maintenance of dendritic spine density. The protein is RING finger protein 112 (RNF112) of Homo sapiens (Human).